A 49-amino-acid chain; its full sequence is Large ribosomal subunit protein bL33A (49 aa).

Belongs to the bacterial ribosomal protein bL33 family.

This chain is Large ribosomal subunit protein bL33A, found in Staphylococcus aureus (strain COL).